The sequence spans 184 residues: Ribosome maturation factor RimM (184 aa).

Residues 105 to 184 (EDEFYWRELF…RIEVDWDPAF (80 aa)) enclose the PRC barrel domain.

This sequence belongs to the RimM family. Binds ribosomal protein uS19.

It localises to the cytoplasm. Its function is as follows. An accessory protein needed during the final step in the assembly of 30S ribosomal subunit, possibly for assembly of the head region. Essential for efficient processing of 16S rRNA. May be needed both before and after RbfA during the maturation of 16S rRNA. It has affinity for free ribosomal 30S subunits but not for 70S ribosomes. The chain is Ribosome maturation factor RimM from Vibrio cholerae serotype O1 (strain ATCC 39541 / Classical Ogawa 395 / O395).